The primary structure comprises 87 residues: Small ribosomal subunit protein uS12m (87 aa).

Belongs to the universal ribosomal protein uS12 family.

It localises to the mitochondrion matrix. Its subcellular location is the kinetoplast. Its function is as follows. Protein S12 is involved in the translation initiation step. This chain is Small ribosomal subunit protein uS12m (RPS12), found in Trypanoplasma borreli.